The primary structure comprises 375 residues: Alcohol dehydrogenase 6 (375 aa).

Residues Cys-47, His-69, Cys-99, Cys-102, Cys-105, Cys-113, and Cys-175 each contribute to the Zn(2+) site. NAD(+) is bound by residues 200-205 (GLGGVG), Asp-224, Lys-229, 293-295 (VGS), and Arg-370.

It belongs to the zinc-containing alcohol dehydrogenase family. Class-V subfamily. As to quaternary structure, dimer. Zn(2+) is required as a cofactor. In terms of tissue distribution, liver.

The protein localises to the cytoplasm. The enzyme catalyses a primary alcohol + NAD(+) = an aldehyde + NADH + H(+). It catalyses the reaction a secondary alcohol + NAD(+) = a ketone + NADH + H(+). Functionally, alcohol dehydrogenase. Catalyzes the NAD-dependent oxidation of primary alcohols to the corresponding aldehydes. Oxidizes secondary alcohols to the corresponding ketones. The sequence is that of Alcohol dehydrogenase 6 (ADH6) from Peromyscus maniculatus (North American deer mouse).